Reading from the N-terminus, the 240-residue chain is Uridylate kinase (240 aa).

13–16 is a binding site for ATP; that stretch reads KISG. Position 55 (glycine 55) interacts with UMP. ATP-binding residues include glycine 56 and arginine 60. UMP contacts are provided by residues aspartate 75 and 136–143; that span reads TGNPFFTT. 4 residues coordinate ATP: threonine 163, glutamine 164, tyrosine 169, and aspartate 172.

The protein belongs to the UMP kinase family. As to quaternary structure, homohexamer.

Its subcellular location is the cytoplasm. It catalyses the reaction UMP + ATP = UDP + ADP. It functions in the pathway pyrimidine metabolism; CTP biosynthesis via de novo pathway; UDP from UMP (UMPK route): step 1/1. With respect to regulation, inhibited by UTP. Its function is as follows. Catalyzes the reversible phosphorylation of UMP to UDP. This Paramagnetospirillum magneticum (strain ATCC 700264 / AMB-1) (Magnetospirillum magneticum) protein is Uridylate kinase.